Here is a 665-residue protein sequence, read N- to C-terminus: Sodium-dependent phosphate transporter 1-B (665 aa).

6 helical membrane-spanning segments follow: residues 26–46 (YMWL…SVGA), 67–87 (ACIL…AKVS), 107–127 (LMAG…AASF), 163–183 (IVAS…VLFY), 202–222 (ALPF…MFTG), and 235–255 (GVLL…WFAV). Disordered stretches follow at residues 294–345 (VPEE…APKT) and 423–442 (ESEF…AQER). Residues 296 to 306 (EESSVLSSSTP) show a composition bias toward low complexity. Residues 329-338 (ADQKDCKESD) are compositionally biased toward basic and acidic residues. The next 4 helical transmembrane spans lie at 499 to 519 (VSML…FAHG), 548 to 568 (TPIW…WVWG), 588 to 608 (FSIE…GLPV), and 638 to 658 (IFMA…AIMA).

It belongs to the inorganic phosphate transporter (PiT) (TC 2.A.20) family.

It localises to the membrane. Functionally, sodium-phosphate symporter which plays a fundamental housekeeping role in phosphate transport. The protein is Sodium-dependent phosphate transporter 1-B (slc20a1b) of Danio rerio (Zebrafish).